A 475-amino-acid polypeptide reads, in one-letter code: MPSSASMSHHHSSGLRSSISSTSYRRTFGPPPSLSPGAFSYSSSSRFSSSRLLGSGSPSSSARLGSFRAPRAGALRLPSERLDFSMAEALNQEFLATRSNEKQELQELNDRFANFIEKVRFLEQQNAALRGELSQARGQEPARADQLCQQELRELRRELELLGRERDRVQVERDGLAEDLAALKQRLEEETRKREDAEHNLVLFRKDVDDATLSRLELERKIESLMDEIEFLKKLHEEELRDLQVSVESQQVQQVEVEATVKPELTAALRDIRAQYENIAAKNLQEAEEWYKSKYADLSDAANRNHEALRQAKQEMNESRRQIQSLTCEVDGLRGTNEALLRQLRELEEQFALEAGGYQAGAARLEEELRQLKEEMARHLREYQELLNVKMALDIEIATYRKLLEGEESRISVPVHSFASLSLKTTVPEMEPLQDSHSKKMVLIRTIETRDGEKVVTESQKEQHSDLDKSSIHSY.

The disordered stretch occupies residues 1–42 (MPSSASMSHHHSSGLRSSISSTSYRRTFGPPPSLSPGAFSYS). The segment at 1 to 103 (MPSSASMSHH…FLATRSNEKQ (103 aa)) is head. Residues 14 to 26 (GLRSSISSTSYRR) show a composition bias toward low complexity. 3'-nitrotyrosine is present on tyrosine 24. A phosphoserine mark is found at serine 35 and serine 57. Serine 66 carries the post-translational modification Phosphoserine; by PKB/AKT1. Residues 101 to 411 (EKQELQELND…KLLEGEESRI (311 aa)) form the IF rod domain. Positions 104–136 (ELQELNDRFANFIEKVRFLEQQNAALRGELSQA) are coil 1A. The linker 1 stretch occupies residues 137 to 147 (RGQEPARADQL). The tract at residues 148-243 (CQQELRELRR…KLHEEELRDL (96 aa)) is coil 1B. The tract at residues 244–266 (QVSVESQQVQQVEVEATVKPELT) is linker 2. Residues 267-409 (AALRDIRAQY…YRKLLEGEES (143 aa)) are coil 2. Tyrosine 383 is subject to 3'-nitrotyrosine. Residues 410 to 475 (RISVPVHSFA…DLDKSSIHSY (66 aa)) form a tail region. The segment at 453-475 (EKVVTESQKEQHSDLDKSSIHSY) is disordered. Residue tyrosine 475 is modified to Phosphotyrosine.

Belongs to the intermediate filament family. As to quaternary structure, forms homodimers (in vitro). Homopolymerizes into a filamentous network (in vitro). Forms heterodimers with NEFL, NEFM or NEFH (in vitro). Interacts with DST (via C-terminus). Interacts with RAB7A; the interaction is direct. Interacts with PRKCE (via phorbol-ester/DAG-type 2 domain). Phosphorylated; phosphorylation increases after nerve injury in regenerating neurons. Expressed in the sciatic nerve and at very low levels in the central nervous system (at protein level). Expressed in the spinal cord, in the sciatic nerve at the level of the dorsal root ganglion and in trigeminal nerves (at protein level). Expressed in the cranial nerves in the hindbrain, including the sensory and motor trigeminal neurons, the mesencephalic trigeminal neurons, the spinal trigeminal neurons, and in the facial nerve (at protein level). Expressed in the cerebellum, with expression in the inferior cerebellar peduncle and the lateral deep cerebellar nucleus (at protein level). Expressed in vestibulocochlear neurons, such as the anteroventral cochlear nucleus, the dorsal cochlear nucleus, the superficial granule cell layer and the granule cell lamina (at protein level). Expressed in glossopharyngeal, vagal and hypoglossal neurons (at protein level). Expressed in peripheral sensory neurons, in the dorsal root ganglia and the spinal cord, and to a lower extent in motor neurons. Expressed in the optic tract of the central nervous system, especially in the lateral geniculate nucleus and the superior colliculus. Expressed in neurons of the pineal stalk in the cortex. Expressed in the spinal trigeminal tract of the midbrain, in the medulla and in the medial cerebellar peduncle.

It is found in the cytoplasm. It localises to the cytoskeleton. The protein resides in the cell projection. The protein localises to the axon. Its subcellular location is the perikaryon. Functionally, class-III neuronal intermediate filament protein. May form an independent structural network without the involvement of other neurofilaments or may cooperate with the neuronal intermediate filament proteins NEFL, NEFH, NEFM and INA to form filamentous networks. Assembly of the neuronal intermediate filaments may be regulated by RAB7A. Plays a role in the development of unmyelinated sensory neurons. May be involved in axon elongation and axon regeneration after injury. Inhibits neurite extension in type II spiral ganglion neurons in the cochlea. This chain is Peripherin (Prph), found in Mus musculus (Mouse).